The sequence spans 100 residues: Probable steroid-binding protein 3 (100 aa).

Met-1 carries the post-translational modification N-acetylmethionine. Positions 1 to 82 (MEFTAEQLSQ…LTEKEINTLN (82 aa)) constitute a Cytochrome b5 heme-binding domain. Residues 1-82 (MEFTAEQLSQ…LTEKEINTLN (82 aa)) are sterol-binding.

The protein belongs to the cytochrome b5 family. MAPR subfamily.

Its subcellular location is the nucleus. The chain is Probable steroid-binding protein 3 (MP3) from Arabidopsis thaliana (Mouse-ear cress).